The sequence spans 348 residues: Flagellar P-ring protein (348 aa).

The N-terminal stretch at 1–16 is a signal peptide; it reads MRIFLLCLALSLSVFA.

Belongs to the FlgI family. The basal body constitutes a major portion of the flagellar organelle and consists of four rings (L,P,S, and M) mounted on a central rod.

The protein localises to the periplasm. It is found in the bacterial flagellum basal body. Its function is as follows. Assembles around the rod to form the L-ring and probably protects the motor/basal body from shearing forces during rotation. This Campylobacter lari (strain RM2100 / D67 / ATCC BAA-1060) protein is Flagellar P-ring protein.